A 341-amino-acid polypeptide reads, in one-letter code: L-amino acid-D/L-Glu epimerase (341 aa).

Substrate is bound by residues Thr-132 and Lys-157–Lys-159. Mg(2+) is bound by residues Asp-186, Glu-212, and Asp-237. Substrate-binding positions include Lys-261 and Asp-315 to Asp-317.

The protein belongs to the mandelate racemase/muconate lactonizing enzyme family. Mg(2+) serves as cofactor.

Functionally, catalyzes the epimerization of dipeptides with L-Glu in the second position. Has epimerase activity with L-Gly-L-Glu, L-Ala-L-Glu, L-Ser-L-Glu, L-Pro-L-Glu, L-Val-L-Glu, L-Met-L-Glu, L-Thr-L-Glu and L-Phe-L-Glu (in vitro). This chain is L-amino acid-D/L-Glu epimerase, found in Sulfurimonas denitrificans (strain ATCC 33889 / DSM 1251) (Thiomicrospira denitrificans (strain ATCC 33889 / DSM 1251)).